The sequence spans 101 residues: Large ribosomal subunit protein bL21 (101 aa).

This sequence belongs to the bacterial ribosomal protein bL21 family. Part of the 50S ribosomal subunit. Contacts protein L20.

Functionally, this protein binds to 23S rRNA in the presence of protein L20. This Micrococcus luteus (strain ATCC 4698 / DSM 20030 / JCM 1464 / CCM 169 / CCUG 5858 / IAM 1056 / NBRC 3333 / NCIMB 9278 / NCTC 2665 / VKM Ac-2230) (Micrococcus lysodeikticus) protein is Large ribosomal subunit protein bL21.